A 215-amino-acid chain; its full sequence is Porin MspC (215 aa).

Residues 1 to 31 form the signal peptide; sequence MKAISRVLIAMISALAAAVAGLFVSAGTSHA.

This sequence belongs to the mycobacterial porin (TC 1.B.24) family. As to quaternary structure, octamers. Probably forms a goblet with the wide end on the exterior of the outer membrane and a central channel. It is not known if mixed oligomers of MspC with other Msp subunits form in vivo.

The protein localises to the cell outer membrane. It localises to the secreted. Its subcellular location is the cell wall. Its function is as follows. A constitutively expressed secondary porin, forms a water-filled channel which favors the permeation of cations and less efficiently phosphate. There are about 2400 porins in wild-type, 800 in an mspA deletion and 150 in a double mspA-mspC deletion. The protein is Porin MspC (mspC) of Mycolicibacterium smegmatis (strain ATCC 700084 / mc(2)155) (Mycobacterium smegmatis).